A 466-amino-acid chain; its full sequence is UDP-N-acetylmuramoylalanine--D-glutamate ligase (466 aa).

Residue 121–127 participates in ATP binding; the sequence is GTNGKST.

It belongs to the MurCDEF family.

The protein resides in the cytoplasm. The catalysed reaction is UDP-N-acetyl-alpha-D-muramoyl-L-alanine + D-glutamate + ATP = UDP-N-acetyl-alpha-D-muramoyl-L-alanyl-D-glutamate + ADP + phosphate + H(+). It participates in cell wall biogenesis; peptidoglycan biosynthesis. Cell wall formation. Catalyzes the addition of glutamate to the nucleotide precursor UDP-N-acetylmuramoyl-L-alanine (UMA). The protein is UDP-N-acetylmuramoylalanine--D-glutamate ligase of Rhodopseudomonas palustris (strain HaA2).